We begin with the raw amino-acid sequence, 570 residues long: Nucleoprotein (570 aa).

The tract at residues 54–241 is binding site for the cap structure m7GTP; the sequence is MRKEKRDDSD…IEPKKSAINI (188 aa). Mn(2+) contacts are provided by D390 and E392. 4 residues coordinate Zn(2+): E400, C507, H510, and C530. D534 is a binding site for Mn(2+).

It belongs to the arenaviridae nucleocapsid protein family. As to quaternary structure, homomultimerizes to form the nucleocapsid. Binds to viral genomic RNA. Interacts with glycoprotein G2. Interacts with protein Z; this interaction probably directs the encapsidated genome to budding sites. Interacts with protein L; this interaction does not interfere with Z-L interaction. Interacts with host IKBKE (via Protein kinase domain); the interaction inhibits IKBKE kinase activity.

The protein localises to the virion. It localises to the host cytoplasm. Encapsidates the genome, protecting it from nucleases. The encapsidated genomic RNA is termed the nucleocapsid (NC). Serves as template for viral transcription and replication. The increased presence of protein N in host cell does not seem to trigger the switch from transcription to replication as observed in other negative strain RNA viruses. Through the interaction with host IKBKE, strongly inhibits the phosphorylation and nuclear translocation of host IRF3, a protein involved in interferon activation pathway, leading to the inhibition of interferon-beta and IRF3-dependent promoters activation. Also encodes a functional 3'-5' exoribonuclease that degrades preferentially dsRNA substrates and thereby participates in the suppression of interferon induction. In Mopeia virus (MOPV), this protein is Nucleoprotein.